A 202-amino-acid polypeptide reads, in one-letter code: Small ribosomal subunit protein uS4 (202 aa).

Residues 18–44 (LPGLTRKSARREYPPGQHGQGRRKRSE) form a disordered region. In terms of domain architecture, S4 RNA-binding spans 90 to 152 (MRLDNTVFRL…DRSRKLIEAN (63 aa)).

It belongs to the universal ribosomal protein uS4 family. As to quaternary structure, part of the 30S ribosomal subunit. Contacts protein S5. The interaction surface between S4 and S5 is involved in control of translational fidelity.

Its function is as follows. One of the primary rRNA binding proteins, it binds directly to 16S rRNA where it nucleates assembly of the body of the 30S subunit. Functionally, with S5 and S12 plays an important role in translational accuracy. This chain is Small ribosomal subunit protein uS4, found in Picosynechococcus sp. (strain ATCC 27264 / PCC 7002 / PR-6) (Agmenellum quadruplicatum).